The sequence spans 217 residues: Octanoyltransferase (217 aa).

The region spanning 32–207 is the BPL/LPL catalytic domain; the sequence is SDSPDELWIV…TLSQLLGYQQ (176 aa). Residues 71-78, 138-140, and 151-153 contribute to the substrate site; these read RGGQVTYH, SLG, and GLA. Cys-169 serves as the catalytic Acyl-thioester intermediate.

It belongs to the LipB family.

It localises to the cytoplasm. The catalysed reaction is octanoyl-[ACP] + L-lysyl-[protein] = N(6)-octanoyl-L-lysyl-[protein] + holo-[ACP] + H(+). It participates in protein modification; protein lipoylation via endogenous pathway; protein N(6)-(lipoyl)lysine from octanoyl-[acyl-carrier-protein]: step 1/2. Its function is as follows. Catalyzes the transfer of endogenously produced octanoic acid from octanoyl-acyl-carrier-protein onto the lipoyl domains of lipoate-dependent enzymes. Lipoyl-ACP can also act as a substrate although octanoyl-ACP is likely to be the physiological substrate. In Shewanella sp. (strain ANA-3), this protein is Octanoyltransferase.